Here is a 299-residue protein sequence, read N- to C-terminus: Acetylglutamate kinase (299 aa).

Residues 70–71 (GG), arginine 92, and asparagine 186 contribute to the substrate site.

Belongs to the acetylglutamate kinase family. ArgB subfamily.

Its subcellular location is the cytoplasm. The catalysed reaction is N-acetyl-L-glutamate + ATP = N-acetyl-L-glutamyl 5-phosphate + ADP. Its pathway is amino-acid biosynthesis; L-arginine biosynthesis; N(2)-acetyl-L-ornithine from L-glutamate: step 2/4. Its function is as follows. Catalyzes the ATP-dependent phosphorylation of N-acetyl-L-glutamate. The chain is Acetylglutamate kinase from Petrotoga mobilis (strain DSM 10674 / SJ95).